Consider the following 402-residue polypeptide: UDP-N-acetylmuramoylalanine--D-glutamate ligase (402 aa).

97-103 (GTNGKTT) provides a ligand contact to ATP.

It belongs to the MurCDEF family.

The protein localises to the cytoplasm. It carries out the reaction UDP-N-acetyl-alpha-D-muramoyl-L-alanine + D-glutamate + ATP = UDP-N-acetyl-alpha-D-muramoyl-L-alanyl-D-glutamate + ADP + phosphate + H(+). It participates in cell wall biogenesis; peptidoglycan biosynthesis. Its function is as follows. Cell wall formation. Catalyzes the addition of glutamate to the nucleotide precursor UDP-N-acetylmuramoyl-L-alanine (UMA). The protein is UDP-N-acetylmuramoylalanine--D-glutamate ligase of Campylobacter jejuni subsp. jejuni serotype O:23/36 (strain 81-176).